A 525-amino-acid chain; its full sequence is Peptide chain release factor 3 (525 aa).

The 268-residue stretch at 9-276 folds into the tr-type G domain; sequence AKRRTFAIIS…GFTRYAPAPQ (268 aa). GTP is bound by residues 18-25, 86-90, and 140-143; these read SHPDAGKT, DTPGH, and NKFD.

It belongs to the TRAFAC class translation factor GTPase superfamily. Classic translation factor GTPase family. PrfC subfamily.

It localises to the cytoplasm. Functionally, increases the formation of ribosomal termination complexes and stimulates activities of RF-1 and RF-2. It binds guanine nucleotides and has strong preference for UGA stop codons. It may interact directly with the ribosome. The stimulation of RF-1 and RF-2 is significantly reduced by GTP and GDP, but not by GMP. This chain is Peptide chain release factor 3, found in Francisella tularensis subsp. mediasiatica (strain FSC147).